A 322-amino-acid chain; its full sequence is Manganese-dependent ADP-ribose/CDP-alcohol diphosphatase (322 aa).

Residues Asp-13, Gln-15, Asp-60, Asn-96, His-228, His-265, and His-267 each contribute to the Zn(2+) site.

The protein belongs to the ADPRibase-Mn family. Monomer. Requires Mg(2+) as cofactor.

The enzyme catalyses CDP-choline + H2O = phosphocholine + CMP + 2 H(+). It catalyses the reaction ADP-D-ribose + H2O = D-ribose 5-phosphate + AMP + 2 H(+). The catalysed reaction is CDP-glycerol + H2O = sn-glycerol 3-phosphate + CMP + 2 H(+). Its function is as follows. Hydrolyzes ADP-ribose, IDP-ribose, CDP-glycerol, CDP-choline and CDP-ethanolamine, but not other non-reducing ADP-sugars or CDP-glucose. This chain is Manganese-dependent ADP-ribose/CDP-alcohol diphosphatase (adprm), found in Danio rerio (Zebrafish).